The chain runs to 190 residues: Large ribosomal subunit protein bL9 (190 aa).

It belongs to the bacterial ribosomal protein bL9 family.

In terms of biological role, binds to the 23S rRNA. This is Large ribosomal subunit protein bL9 from Methylobacterium radiotolerans (strain ATCC 27329 / DSM 1819 / JCM 2831 / NBRC 15690 / NCIMB 10815 / 0-1).